A 478-amino-acid polypeptide reads, in one-letter code: Isoeugenol monooxygenase (478 aa).

Residues His-167, His-218, His-282, and His-471 each contribute to the Fe cation site.

Belongs to the carotenoid oxygenase family. In terms of assembly, monomer. Fe(2+) serves as cofactor.

The catalysed reaction is (E)-isoeugenol + O2 = vanillin + acetaldehyde. With respect to regulation, inhibited by HgCl(2), AgNO(3), CuCl(2), phenylhydrazine, 8-hydroxyquinoline, R-cycloserine and p-chloromercuribenzoic acid. Its function is as follows. Involved in isoeugenol degradation. Catalyzes the oxidative cleavage of the side chain double-bond of isoeugenol to form vanillin and acetaldehyde. The sequence is that of Isoeugenol monooxygenase from Pseudomonas putida (Arthrobacter siderocapsulatus).